The sequence spans 214 residues: Adenylate kinase (214 aa).

An ATP-binding site is contributed by 10-15 (GGGKGT). Residues 30-59 (STGDMFRENVKGGTELGLKAKEYMDAGQLV) are NMP. Residues T31, R36, 57-59 (QLV), 85-88 (GFPR), and Q92 contribute to the AMP site. The segment at 126-163 (GRRVCRVCGATFHVLFNAPKEDGKCDKCGGELYQRSDD) is LID. R127 is a binding site for ATP. Zn(2+)-binding residues include C130 and C133. Residue 136–137 (TF) participates in ATP binding. Zn(2+) is bound by residues C150 and C153. AMP-binding residues include R160 and R171. Q199 contributes to the ATP binding site.

Belongs to the adenylate kinase family. In terms of assembly, monomer.

Its subcellular location is the cytoplasm. It carries out the reaction AMP + ATP = 2 ADP. The protein operates within purine metabolism; AMP biosynthesis via salvage pathway; AMP from ADP: step 1/1. Its function is as follows. Catalyzes the reversible transfer of the terminal phosphate group between ATP and AMP. Plays an important role in cellular energy homeostasis and in adenine nucleotide metabolism. The sequence is that of Adenylate kinase from Desulforudis audaxviator (strain MP104C).